The primary structure comprises 376 residues: Fructose-1,6-bisphosphate aldolase/phosphatase (376 aa).

Catalysis depends on Asp11, which acts as the Proton acceptor; for FBP phosphatase activity. Mg(2+)-binding residues include Asp11, His18, Asp49, and Asp50. Position 18 (His18) interacts with beta-D-fructose 1,6-bisphosphate. His18 serves as a coordination point for dihydroxyacetone phosphate. Tyr87 provides a ligand contact to beta-D-fructose 1,6-bisphosphate. Gln91 provides a ligand contact to Mg(2+). Residue 100–101 (GN) coordinates beta-D-fructose 1,6-bisphosphate. Asp128 contacts Mg(2+). Residue Lys129 participates in beta-D-fructose 1,6-bisphosphate binding. Position 129 (Lys129) interacts with dihydroxyacetone phosphate. Tyr224 acts as the Proton donor/acceptor; for FBP aldolase activity in catalysis. Mg(2+)-binding residues include Lys227, Asp228, and Asp229. Lys227 acts as the Schiff-base intermediate with DHAP; for FBP aldolase activity in catalysis. Residues 237–238 (QK), Arg261, and Tyr342 each bind beta-D-fructose 1,6-bisphosphate. Residue Arg261 coordinates dihydroxyacetone phosphate. The segment at 357–376 (MVPLKDSGPAGTGRAYEDPD) is disordered.

Belongs to the FBP aldolase/phosphatase family. In terms of assembly, homooctamer; dimer of tetramers. Mg(2+) serves as cofactor.

The catalysed reaction is beta-D-fructose 1,6-bisphosphate + H2O = beta-D-fructose 6-phosphate + phosphate. It catalyses the reaction beta-D-fructose 1,6-bisphosphate = D-glyceraldehyde 3-phosphate + dihydroxyacetone phosphate. It functions in the pathway carbohydrate biosynthesis; gluconeogenesis. In terms of biological role, catalyzes two subsequent steps in gluconeogenesis: the aldol condensation of dihydroxyacetone phosphate (DHAP) and glyceraldehyde-3-phosphate (GA3P) to fructose-1,6-bisphosphate (FBP), and the dephosphorylation of FBP to fructose-6-phosphate (F6P). In Cenarchaeum symbiosum (strain A), this protein is Fructose-1,6-bisphosphate aldolase/phosphatase.